Reading from the N-terminus, the 911-residue chain is Disks large homolog 1 (911 aa).

The L27 domain occupies 4–64; it reads RKQDTQRALH…FYEVTLLDNP (61 aa). S39 is subject to Phosphoserine; by CaMK2. A disordered region spans residues 70-105; sequence SKQCEPVQPGNPWESGSLSSAAVTSESLPGGLSPPV. Residues 83-96 are compositionally biased toward polar residues; sequence ESGSLSSAAVTSES. 3 positions are modified to phosphoserine: S122, S138, and S158. The segment at 162–212 is interaction with SH3 domains; the sequence is PTEAVPPSSPIVPVTPALPVPAESPVVLPSTPQANPPPVLVNTDSLETPTY. PDZ domains are found at residues 224-310 and 318-404; these read EITL…VKRR and EIKL…AAKP. The interval 224-545 is required for interaction with MARCHF2; the sequence is EITLERGNSG…QAVTIVAQYR (322 aa). S232 is subject to Phosphoserine; by CaMK2. The residue at position 398 (Y398) is a Phosphotyrosine. Polar residues predominate over residues 419 to 441; that stretch reads TNSSSQSVDNHVSPSSYLGQTPA. The interval 419-443 is disordered; that stretch reads TNSSSQSVDNHVSPSSYLGQTPASP. A PDZ 3 domain is found at 465-545; the sequence is KVVLHRGSTG…QAVTIVAQYR (81 aa). Phosphoserine is present on residues S567, S572, S574, S578, S597, S618, S684, S687, and S841. Positions 580-650 constitute an SH3 domain; the sequence is KRSLYVRALF…PSKRRVEKKE (71 aa). The tract at residues 662-696 is disordered; it reads KTRGDKGEIPDDMGSKGLKHVTSNASDSESSYHEY. The region spanning 721 to 896 is the Guanylate kinase-like domain; the sequence is TRPVIILGPM…IYNQVKQIIE (176 aa).

It belongs to the MAGUK family. As to quaternary structure, homotetramer. Interacts (via guanylate kinase-like domain) with DLGAP1, DLGAP2, DLGAP3, DLGAP4 and MAP1A. Interacts (via guanylate kinase-like domain) with KIF13B. May interact with HTR2A. Interacts (via PDZ domains) with GRIA1. Interacts (via PDZ domains) with GRIN2A. Interacts (via PDZ domains) with KCND2 and KCND3. Interacts (via PDZ domains) with KCNA1, KCNA2, KCNA3 and KCNA4. Interacts (via PDZ domains) with ADGRA3. Interacts with KCNF1. Interacts with CAMK2. Interacts with cytoskeleton-associated protein EPB41. Interacts with cytoskeleton-associated protein EZR. Found in a complex with KCNA5 and CAV3. Found in a complex with APC and CTNNB1. Interacts (via PDZ domains) with APC. Interacts with CDH1 through binding to PIK3R1. Forms multiprotein complexes with CASK, LIN7A, LIN7B, LIN7C, APBA1, and KCNJ12. Interacts with TOPK. Forms a tripartite complex composed of DLG1, MPP7 and LIN7 (LIN7A or LIN7C). May interact with TJAP1. Interacts with PTEN. Interacts with FRMPD4 (via C-terminus). Interacts with LRFN1 and LRFN2. Interacts with LRFN4 and SFPQ. Interacts (via PDZ domains) with ADGRA2 (via PDZ-binding motif). Interacts with ADAM10; this interaction recruits ADAM10 to the cell membrane during long-term depression in hippocampal neurons. Interacts with DGKI (via PDZ-binding motif). Interacts (via PDZ domains) with MARCHF2 (via PDZ domain); the interaction leads to DLG1 ubiqtuitination and degradation. Interacts (via N-terminus) with MPP3; this interaction connects CADM1 with DLG1 and links CADM1 with the regulatory subunit of phosphoinositide-3-kinase (PI3K) by forming a multiprotein complex and participates in cell spreading. In terms of processing, phosphorylated by MAPK12. Phosphorylation of Ser-39 modulates transport to the plasma membrane. Phosphorylation of Ser-232 regulates association with GRIN2A. Ubiquitinated; by MARCHF2 which results in its degradation. In terms of tissue distribution, widely expressed. Strongly expressed in epithelial cells, in the small intestine it is only detected in the vili. Expressed in brain, heart (at protein level), muscle, lung and liver. In the brain it was detected in olfactory bulbs, cerebral cortex, hippocampus, and spinal cord (at protein level).

The protein resides in the cell membrane. The protein localises to the basolateral cell membrane. It is found in the endoplasmic reticulum membrane. It localises to the postsynaptic density. Its subcellular location is the synapse. The protein resides in the sarcolemma. The protein localises to the cell junction. It is found in the cytoplasm. It localises to the apical cell membrane. In terms of biological role, essential multidomain scaffolding protein required for normal development. Recruits channels, receptors and signaling molecules to discrete plasma membrane domains in polarized cells. Promotes epithelial cell layer barrier function via maintaining cell-cell adhesion. May play a role in adherens junction assembly, signal transduction, cell proliferation, synaptogenesis and lymphocyte activation. Regulates the excitability of cardiac myocytes by modulating the functional expression of Kv4 channels. Functional regulator of Kv1.5 channel. During long-term depression in hippocampal neurons, it recruits ADAM10 to the plasma membrane. The protein is Disks large homolog 1 of Rattus norvegicus (Rat).